A 200-amino-acid chain; its full sequence is Large ribosomal subunit protein uL4 (200 aa).

Residues 38 to 72 (GRQGTKQQKTRSDVAGGGKRPWRQKGTGRARAGTT) form a disordered region.

This sequence belongs to the universal ribosomal protein uL4 family. In terms of assembly, part of the 50S ribosomal subunit.

One of the primary rRNA binding proteins, this protein initially binds near the 5'-end of the 23S rRNA. It is important during the early stages of 50S assembly. It makes multiple contacts with different domains of the 23S rRNA in the assembled 50S subunit and ribosome. In terms of biological role, forms part of the polypeptide exit tunnel. The protein is Large ribosomal subunit protein uL4 of Pseudomonas entomophila (strain L48).